A 238-amino-acid chain; its full sequence is Uridylate kinase (238 aa).

12–15 lines the ATP pocket; sequence KLSG. Gly54 is a binding site for UMP. ATP contacts are provided by Gly55 and Arg59. Residues Asp74 and 135–142 each bind UMP; that span reads TGNPFFTT. ATP is bound by residues Thr162, Tyr168, and Asp171.

The protein belongs to the UMP kinase family. In terms of assembly, homohexamer.

The protein resides in the cytoplasm. It catalyses the reaction UMP + ATP = UDP + ADP. It functions in the pathway pyrimidine metabolism; CTP biosynthesis via de novo pathway; UDP from UMP (UMPK route): step 1/1. Inhibited by UTP. Functionally, catalyzes the reversible phosphorylation of UMP to UDP. The polypeptide is Uridylate kinase (Dechloromonas aromatica (strain RCB)).